A 429-amino-acid chain; its full sequence is Glutamate-1-semialdehyde 2,1-aminomutase (429 aa).

An N6-(pyridoxal phosphate)lysine modification is found at lysine 265.

It belongs to the class-III pyridoxal-phosphate-dependent aminotransferase family. HemL subfamily. In terms of assembly, homodimer. Pyridoxal 5'-phosphate is required as a cofactor.

It localises to the cytoplasm. It carries out the reaction (S)-4-amino-5-oxopentanoate = 5-aminolevulinate. It participates in porphyrin-containing compound metabolism; protoporphyrin-IX biosynthesis; 5-aminolevulinate from L-glutamyl-tRNA(Glu): step 2/2. In Azotobacter vinelandii (strain DJ / ATCC BAA-1303), this protein is Glutamate-1-semialdehyde 2,1-aminomutase.